A 212-amino-acid chain; its full sequence is MSLFDKKHLVTQADALPGRNTPMPIATLHAVNEHSMTNVPAGMEIAYFAMGCFWGVERLFWQLPGVYSTAAGYAGGYTPNPTYREVCSGQTGHAEAVRIVYDPAVIRYEQLLQTFWENHDPTQGMQQGNDHGTQYRSAIYPLTPEQNAAAHASRERFQAAMAAAGDHRPITTEIAHATPFYYAEDEHQQYLHKNPYGYCGIGGIGVCLPPDA.

Cys-52 is a catalytic residue.

It belongs to the MsrA Met sulfoxide reductase family.

It catalyses the reaction L-methionyl-[protein] + [thioredoxin]-disulfide + H2O = L-methionyl-(S)-S-oxide-[protein] + [thioredoxin]-dithiol. The enzyme catalyses [thioredoxin]-disulfide + L-methionine + H2O = L-methionine (S)-S-oxide + [thioredoxin]-dithiol. In terms of biological role, has an important function as a repair enzyme for proteins that have been inactivated by oxidation. Catalyzes the reversible oxidation-reduction of methionine sulfoxide in proteins to methionine. The protein is Peptide methionine sulfoxide reductase MsrA of Salmonella agona (strain SL483).